We begin with the raw amino-acid sequence, 277 residues long: Inositol monophosphatase 1 (277 aa).

Residues E70, D90, I92, and D93 each coordinate Mg(2+). Residue E70 participates in substrate binding. Substrate contacts are provided by residues 92–95 (IDGT), 194–196 (GTA), E213, and D220. A Mg(2+)-binding site is contributed by D220.

Belongs to the inositol monophosphatase superfamily. Homodimer. Requires Mg(2+) as cofactor. As to expression, ubiquitous.

The protein resides in the cytoplasm. The catalysed reaction is a myo-inositol phosphate + H2O = myo-inositol + phosphate. The enzyme catalyses 1D-myo-inositol 1-phosphate + H2O = myo-inositol + phosphate. It carries out the reaction 1D-myo-inositol 2-phosphate + H2O = myo-inositol + phosphate. It catalyses the reaction 1D-myo-inositol 3-phosphate + H2O = myo-inositol + phosphate. The catalysed reaction is 1D-myo-inositol 4-phosphate + H2O = myo-inositol + phosphate. The enzyme catalyses 1D-myo-inositol 5-phosphate + H2O = myo-inositol + phosphate. It carries out the reaction 1D-myo-inositol 6-phosphate + H2O = myo-inositol + phosphate. It catalyses the reaction scyllo-inositol 1-phosphate + H2O = scyllo-inositol + phosphate. The catalysed reaction is alpha-D-galactose 1-phosphate + H2O = D-galactose + phosphate. The enzyme catalyses alpha-D-glucose 1-phosphate + H2O = D-glucose + phosphate. It carries out the reaction D-glucose 6-phosphate + H2O = D-glucose + phosphate. It catalyses the reaction beta-D-fructose 1-phosphate + H2O = D-fructose + phosphate. The catalysed reaction is glycerol 2-phosphate + H2O = glycerol + phosphate. The enzyme catalyses adenosine 2'-phosphate + H2O = adenosine + phosphate. It functions in the pathway polyol metabolism; myo-inositol biosynthesis; myo-inositol from D-glucose 6-phosphate: step 2/2. Activity with myo-inositol monophosphate and D-galactose 1-phosphate is inhibited by Li(+), Ca(2+) and Mn(2+), but also by Mg(2+) at concentrations above 3 mM. Its function is as follows. Phosphatase involved in the dephosphorylation of myo-inositol monophosphate to generate myo-inositol. Is also able to dephosphorylate scyllo-inositol-phosphate, myo-inositol 1,4-diphosphate, scyllo-inositol-1,3-diphosphate and scyllo-inositol-1,4-diphosphate. Also dephosphorylates in vitro other sugar-phosphates including D-galactose-1-phosphate, glucose-1-phosphate, glucose-6-phosphate, fructose-1-phosphate, beta-glycerophosphate and 2'-AMP. Responsible for the provision of inositol required for synthesis of phosphatidylinositol and polyphosphoinositides, and involved in maintaining normal brain function. Has been implicated as the pharmacological target for lithium Li(+) action in brain. Is equally active with myo-inositol monophosphate and D-galactose 1-phosphate. The chain is Inositol monophosphatase 1 (Impa1) from Rattus norvegicus (Rat).